Reading from the N-terminus, the 154-residue chain is Crossover junction endodeoxyribonuclease RuvC (154 aa).

Catalysis depends on residues Asp-7, Glu-67, and Asp-139. Mg(2+) is bound by residues Asp-7, Glu-67, and Asp-139.

This sequence belongs to the RuvC family. In terms of assembly, homodimer which binds Holliday junction (HJ) DNA. The HJ becomes 2-fold symmetrical on binding to RuvC with unstacked arms; it has a different conformation from HJ DNA in complex with RuvA. In the full resolvosome a probable DNA-RuvA(4)-RuvB(12)-RuvC(2) complex forms which resolves the HJ. It depends on Mg(2+) as a cofactor.

Its subcellular location is the cytoplasm. The catalysed reaction is Endonucleolytic cleavage at a junction such as a reciprocal single-stranded crossover between two homologous DNA duplexes (Holliday junction).. In terms of biological role, the RuvA-RuvB-RuvC complex processes Holliday junction (HJ) DNA during genetic recombination and DNA repair. Endonuclease that resolves HJ intermediates. Cleaves cruciform DNA by making single-stranded nicks across the HJ at symmetrical positions within the homologous arms, yielding a 5'-phosphate and a 3'-hydroxyl group; requires a central core of homology in the junction. The consensus cleavage sequence is 5'-(A/T)TT(C/G)-3'. Cleavage occurs on the 3'-side of the TT dinucleotide at the point of strand exchange. HJ branch migration catalyzed by RuvA-RuvB allows RuvC to scan DNA until it finds its consensus sequence, where it cleaves and resolves the cruciform DNA. In Synechococcus sp. (strain CC9902), this protein is Crossover junction endodeoxyribonuclease RuvC.